We begin with the raw amino-acid sequence, 709 residues long: Septu protein PtuA (709 aa).

Component of antiviral defense system Septu type II, composed of PtuA and PtuB. Expression of Septu type II in B.subtilis (strain BEST7003) confers resistance to phages SBSphiC and SpBeta. May be an ATPase. This chain is Septu protein PtuA, found in Bacillus mycoides (strain KBAB4) (Bacillus weihenstephanensis).